A 340-amino-acid chain; its full sequence is Glyceraldehyde-3-phosphate dehydrogenase (340 aa).

Residues 11–12 (SI) and glycine 111 contribute to the NAD(+) site. A D-glyceraldehyde 3-phosphate-binding site is contributed by 140 to 142 (SCN). Cysteine 141 serves as the catalytic Nucleophile. Position 169 (arginine 169) interacts with NAD(+). Residue 195 to 196 (HG) participates in D-glyceraldehyde 3-phosphate binding. NAD(+) is bound at residue glutamine 303.

Belongs to the glyceraldehyde-3-phosphate dehydrogenase family. Homotetramer.

Its subcellular location is the cytoplasm. The catalysed reaction is D-glyceraldehyde 3-phosphate + phosphate + NADP(+) = (2R)-3-phospho-glyceroyl phosphate + NADPH + H(+). The enzyme catalyses D-glyceraldehyde 3-phosphate + phosphate + NAD(+) = (2R)-3-phospho-glyceroyl phosphate + NADH + H(+). The protein operates within carbohydrate degradation; glycolysis; pyruvate from D-glyceraldehyde 3-phosphate: step 1/5. In Methanococcus maripaludis (strain C6 / ATCC BAA-1332), this protein is Glyceraldehyde-3-phosphate dehydrogenase.